Reading from the N-terminus, the 578-residue chain is Palmitoyltransferase ZDHHC1 (578 aa).

Over 1–41 (MDVCSKNSNRTAPVSEGGIRRADVPLCSRTNGWSWPPHPFQ) the chain is Cytoplasmic. The helical transmembrane segment at 42–62 (FLAWLLYLYFAVTGFGVFVPL) threads the bilayer. Residues 63–71 (LPTHWIPAG) are Lumenal-facing. A helical membrane pass occupies residues 72–92 (YICTGITFVCHLFMHLMAVSI). Residues 93 to 174 (DPADYNVRAK…YWLFLNSVIS (82 aa)) lie on the Cytoplasmic side of the membrane. The DHHC domain maps to 121–173 (ENCHCYLCEVDVGPKSKHCSACNKCVASFDHHCRWLNNCVGSRNYWLFLNSVI). Cys153 functions as the S-palmitoyl cysteine intermediate in the catalytic mechanism. Residues 175–195 (ALLGIVLVVVIASYVFIEFFL) traverse the membrane as a helical segment. The Lumenal portion of the chain corresponds to 196-230 (DPSKLRSDKHFQQVRNESVVWFVFLPVAPVTTAGP). Residues 231 to 251 (AIPALAGVTIALGLLSALLLG) form a helical membrane-spanning segment. Residues 252 to 578 (HLLCFHIYLM…PSSRVGTSLA (327 aa)) are Cytoplasmic-facing. Residues 278 to 288 (QEAGDSRKPPP) show a composition bias toward basic and acidic residues. Disordered regions lie at residues 278–298 (QEAG…PKLN), 345–376 (HMDE…KRKV), 497–517 (SAAG…TAAR), and 532–578 (SMFM…TSLA). Residues 363 to 376 (PHPHKHAQKKKRKV) show a composition bias toward basic residues. Residues 552 to 561 (AAKRKQTGKK) show a composition bias toward basic residues.

The protein belongs to the DHHC palmitoyltransferase family.

The protein localises to the endosome membrane. It localises to the endoplasmic reticulum membrane. The protein resides in the golgi apparatus. It catalyses the reaction L-cysteinyl-[protein] + hexadecanoyl-CoA = S-hexadecanoyl-L-cysteinyl-[protein] + CoA. Its function is as follows. Palmitoyltransferase that catalyzes the addition of palmitate onto various protein substrates, such as ncdn and nlrp3. In Danio rerio (Zebrafish), this protein is Palmitoyltransferase ZDHHC1.